We begin with the raw amino-acid sequence, 576 residues long: FtsZ-localized protein C (576 aa).

Interacts with FtsZ filaments.

It is found in the cytoplasm. The protein resides in the cell inner membrane. Its function is as follows. Membrane anchor for FtsZ. Binds and recruits FtsZ polymers to membranes early in the cell cycle. May also improve the efficiency of cytokinesis through the regulation of cell wall hydrolysis. This chain is FtsZ-localized protein C, found in Caulobacter vibrioides (strain NA1000 / CB15N) (Caulobacter crescentus).